A 530-amino-acid chain; its full sequence is Chaperone Ric-8A (530 aa).

A Phosphoserine modification is found at Ser-435. A phosphothreonine mark is found at Thr-440 and Thr-442. A phosphoserine mark is found at Ser-501, Ser-522, Ser-523, and Ser-527.

This sequence belongs to the synembryn family. In terms of assembly, interacts with GDP-bound G alpha proteins GNAI1, GNAO1 and GNAQ, and with GNA13 with lower affinity. Does not interact with G-alpha proteins when they are in complex with subunits beta and gamma. Interacts (via C-terminus) with RGS14; the interaction stimulates the dissociation of the complex between RGS14 and the active GTP-bound form of GNAI1. Interacts with NCS1; interaction is favored in the absence of Ca(2+) and myristoylation of NCS1 is not required. In terms of processing, phosphorylated at Ser-435 and Thr-440 by CK2, stabilizing its interface with G alpha proteins.

The protein localises to the cytoplasm. It localises to the cell cortex. Functionally, chaperone that specifically binds and folds nascent G alpha proteins prior to G protein heterotrimer formation, promoting their stability and activity: folds GNAI1, GNAO1, GNA13 and GNAQ. Does not fold G(s) G-alpha proteins GNAS nor GNAL. Also acts as a guanine nucleotide exchange factor (GEF) for G alpha proteins by stimulating exchange of bound GDP for free GTP. Involved in regulation of microtubule pulling forces during mitotic movement of chromosomes by stimulating G(i)-alpha protein (GNAI1), possibly leading to release G(i)-alpha-GTP and NuMA proteins from the NuMA-GPSM2-G(i)-alpha-GDP complex. Also acts as an activator for G(q)-alpha (GNAQ) protein by enhancing the G(q)-coupled receptor-mediated ERK activation. The polypeptide is Chaperone Ric-8A (RIC8A) (Pongo abelii (Sumatran orangutan)).